Reading from the N-terminus, the 294-residue chain is tRNA-cytidine(32) 2-sulfurtransferase (294 aa).

Positions 70-75 (SGGKDS) match the PP-loop motif motif. [4Fe-4S] cluster contacts are provided by C145, C148, and C236.

The protein belongs to the TtcA family. In terms of assembly, homodimer. Requires Mg(2+) as cofactor. The cofactor is [4Fe-4S] cluster.

It is found in the cytoplasm. It carries out the reaction cytidine(32) in tRNA + S-sulfanyl-L-cysteinyl-[cysteine desulfurase] + AH2 + ATP = 2-thiocytidine(32) in tRNA + L-cysteinyl-[cysteine desulfurase] + A + AMP + diphosphate + H(+). Its pathway is tRNA modification. Functionally, catalyzes the ATP-dependent 2-thiolation of cytidine in position 32 of tRNA, to form 2-thiocytidine (s(2)C32). The sulfur atoms are provided by the cysteine/cysteine desulfurase (IscS) system. This is tRNA-cytidine(32) 2-sulfurtransferase from Rhizobium meliloti (strain 1021) (Ensifer meliloti).